A 213-amino-acid chain; its full sequence is Thymidylate kinase (213 aa).

Residue 9–16 (GIEGCGKT) coordinates ATP.

This sequence belongs to the thymidylate kinase family.

The catalysed reaction is dTMP + ATP = dTDP + ADP. Its function is as follows. Phosphorylation of dTMP to form dTDP in both de novo and salvage pathways of dTTP synthesis. The sequence is that of Thymidylate kinase from Geobacter sulfurreducens (strain ATCC 51573 / DSM 12127 / PCA).